The sequence spans 424 residues: UPF0597 protein Shewmr7_2876 (424 aa).

The protein belongs to the UPF0597 family.

The polypeptide is UPF0597 protein Shewmr7_2876 (Shewanella sp. (strain MR-7)).